We begin with the raw amino-acid sequence, 190 residues long: Holliday junction branch migration complex subunit RuvA (190 aa).

The segment at 1–64 (MIGSLTGIIE…DNLTQLYGFL (64 aa)) is domain I. The tract at residues 65 to 142 (DKQEQDYMRM…KMPIEETLII (78 aa)) is domain II. A region of interest (flexible linker) is located at residue K143. The domain III stretch occupies residues 143–190 (KEDDSLAALISLGYDKLKAFNAIQEIKSDFPNANIQEIIRKALQKLSQ).

Belongs to the RuvA family. In terms of assembly, homotetramer. Forms an RuvA(8)-RuvB(12)-Holliday junction (HJ) complex. HJ DNA is sandwiched between 2 RuvA tetramers; dsDNA enters through RuvA and exits via RuvB. An RuvB hexamer assembles on each DNA strand where it exits the tetramer. Each RuvB hexamer is contacted by two RuvA subunits (via domain III) on 2 adjacent RuvB subunits; this complex drives branch migration. In the full resolvosome a probable DNA-RuvA(4)-RuvB(12)-RuvC(2) complex forms which resolves the HJ.

It localises to the cytoplasm. In terms of biological role, the RuvA-RuvB-RuvC complex processes Holliday junction (HJ) DNA during genetic recombination and DNA repair, while the RuvA-RuvB complex plays an important role in the rescue of blocked DNA replication forks via replication fork reversal (RFR). RuvA specifically binds to HJ cruciform DNA, conferring on it an open structure. The RuvB hexamer acts as an ATP-dependent pump, pulling dsDNA into and through the RuvAB complex. HJ branch migration allows RuvC to scan DNA until it finds its consensus sequence, where it cleaves and resolves the cruciform DNA. This is Holliday junction branch migration complex subunit RuvA from Ehrlichia canis (strain Jake).